Consider the following 505-residue polypeptide: Lysine--tRNA ligase (505 aa).

E415 and E422 together coordinate Mg(2+).

The protein belongs to the class-II aminoacyl-tRNA synthetase family. In terms of assembly, homodimer. Mg(2+) serves as cofactor.

It is found in the cytoplasm. It catalyses the reaction tRNA(Lys) + L-lysine + ATP = L-lysyl-tRNA(Lys) + AMP + diphosphate. The polypeptide is Lysine--tRNA ligase (Yersinia pseudotuberculosis serotype O:1b (strain IP 31758)).